The primary structure comprises 662 residues: Transcription activator of gluconeogenesis NECHADRAFT_59099 (662 aa).

Residues 1–61 (MPHEMEENGA…KDPLRPRRKK (61 aa)) are disordered. 2 stretches are compositionally biased toward basic and acidic residues: residues 25 to 34 (TFLKDDEKMT) and 43 to 56 (TEVK…DPLR). A DNA-binding region (zn(2)-C6 fungal-type) is located at residues 66-94 (CFACQRAHLTCGDERPCQRCIKRGLADAC). Disordered stretches follow at residues 105–149 (LHDA…TGSN), 502–524 (YSGR…MTTP), and 580–606 (YRAP…SSRV). Composition is skewed to polar residues over residues 121–130 (YNPTPTPSRT) and 137–149 (SSQS…TGSN). The PAS domain maps to 448–519 (TLVEYDDFLQ…TNTPDHNSQG (72 aa)). Positions 582-593 (APQDPDQKEPGS) are enriched in basic and acidic residues.

It belongs to the ERT1/acuK family.

It is found in the nucleus. Its function is as follows. Transcription factor which regulates nonfermentable carbon utilization. Activator of gluconeogenetic genes. The polypeptide is Transcription activator of gluconeogenesis NECHADRAFT_59099 (Fusarium vanettenii (strain ATCC MYA-4622 / CBS 123669 / FGSC 9596 / NRRL 45880 / 77-13-4) (Fusarium solani subsp. pisi)).